The sequence spans 298 residues: MSEFKVKTGLAQMLKGGVIMDVVTPEQAIIAERAGACAVMALERIPADMRKSGQVCRMSDPRMIKEIMEAVSIPVMAKVRIGHFVEAQILEELQVDYIDESEVLTPADWTHHIEKHNFKVPFVCGAKDLGEALRRINEGAAMIRTKGEAGTGDVSEAVKHITKIKAEIQQYKENLKTESDFAAKATELRVPVDLLKTTLSEGKLPVVNFAAGGVATPADAALLMQLGCEGVFVGSGIFKSSDPEKLACAIVEATTHYDNPAKLLQVSSDLGDLMGGISIQSINEAGGKNGARLSEIGW.

Asp-21 lines the D-ribose 5-phosphate pocket. The Schiff-base intermediate with D-ribose 5-phosphate role is filled by Lys-78. D-ribose 5-phosphate contacts are provided by residues Gly-150, Gly-213, and Gly-234–Ser-235.

This sequence belongs to the PdxS/SNZ family. Homohexamer. Interacts with THI11.

The catalysed reaction is aldehydo-D-ribose 5-phosphate + D-glyceraldehyde 3-phosphate + L-glutamine = pyridoxal 5'-phosphate + L-glutamate + phosphate + 3 H2O + H(+). It participates in cofactor biosynthesis; pyridoxal 5'-phosphate biosynthesis. Functionally, catalyzes the formation of pyridoxal 5'-phosphate from ribose 5-phosphate (RBP), glyceraldehyde 3-phosphate (G3P) and ammonia. The ammonia is provided by a SNO isoform. Can also use ribulose 5-phosphate and dihydroxyacetone phosphate as substrates, resulting from enzyme-catalyzed isomerization of RBP and G3P, respectively. In Saccharomyces cerevisiae (strain ATCC 204508 / S288c) (Baker's yeast), this protein is Probable pyridoxal 5'-phosphate synthase subunit SNZ3 (SNZ3).